We begin with the raw amino-acid sequence, 441 residues long: DNA double-strand break repair protein Mre11 (441 aa).

Mn(2+) is bound by residues D9, H11, D50, and N85. The active-site Proton donor is the H86. The Mn(2+) site is built by H150, D181, and H183. The interval 360-441 (ESLLSDDPDA…SRDSSLGDFA (82 aa)) is disordered. Composition is skewed to acidic residues over residues 379–403 (AEAEESESVEDAADGEDAAAVEDTA) and 411–425 (TDTDTETTADTDSET).

The protein belongs to the MRE11/RAD32 family. In terms of assembly, homodimer. Forms a heterotetramer composed of two Mre11 subunits and two Rad50 subunits. The cofactor is Mn(2+).

Its activity is regulated as follows. Nuclease activity is regulated by Rad50. Part of the Rad50/Mre11 complex, which is involved in the early steps of DNA double-strand break (DSB) repair. Mre11 binds to DSB ends and has both double-stranded 3'-5' exonuclease activity and single-stranded endonuclease activity. In polyploid organisms, the Rad50/Mre11 complex appears to restrain the repair of double-strand breaks by homologous recombination, allowing another pathway to act as the primary mode of repair. The polypeptide is DNA double-strand break repair protein Mre11 (Haloferax volcanii (strain ATCC 29605 / DSM 3757 / JCM 8879 / NBRC 14742 / NCIMB 2012 / VKM B-1768 / DS2) (Halobacterium volcanii)).